The chain runs to 219 residues: 7-cyano-7-deazaguanine synthase (219 aa).

Phe-10 to Leu-20 contacts ATP. Zn(2+) is bound by residues Cys-188, Cys-196, Cys-199, and Cys-202.

The protein belongs to the QueC family. Zn(2+) serves as cofactor.

The enzyme catalyses 7-carboxy-7-deazaguanine + NH4(+) + ATP = 7-cyano-7-deazaguanine + ADP + phosphate + H2O + H(+). Its pathway is purine metabolism; 7-cyano-7-deazaguanine biosynthesis. Functionally, catalyzes the ATP-dependent conversion of 7-carboxy-7-deazaguanine (CDG) to 7-cyano-7-deazaguanine (preQ(0)). In Neisseria meningitidis serogroup B (strain ATCC BAA-335 / MC58), this protein is 7-cyano-7-deazaguanine synthase.